We begin with the raw amino-acid sequence, 495 residues long: Trimethylamine methyltransferase MttB1 (495 aa).

A non-standard amino acid (pyrrolysine) is located at residue Pyl334.

The protein belongs to the trimethylamine methyltransferase family. In terms of assembly, can form a complex with MttC.

It carries out the reaction Co(I)-[trimethylamine-specific corrinoid protein] + trimethylamine + H(+) = methyl-Co(III)-[trimethylamine-specific corrinoid protein] + dimethylamine. It participates in one-carbon metabolism; methanogenesis from trimethylamine. Its function is as follows. Catalyzes the transfer of a methyl group from trimethylamine to the corrinoid cofactor of MttC. In Methanosarcina acetivorans (strain ATCC 35395 / DSM 2834 / JCM 12185 / C2A), this protein is Trimethylamine methyltransferase MttB1 (mttB1).